The sequence spans 627 residues: Sodium- and chloride-dependent GABA transporter 3 (627 aa).

A disordered region spans residues 1–36 (MTAEQALPLGNGKAAEEARGSEALGGGGGGAAGTRE). Residues 1–53 (MTAEQALPLGNGKAAEEARGSEALGGGGGGAAGTREARDKAVHERGHWNNKVE) are Cytoplasmic-facing. Ser21 bears the Phosphoserine mark. The segment covering 23-32 (ALGGGGGGAA) has biased composition (gly residues). 3 consecutive transmembrane segments (helical) span residues 54 to 74 (FVLS…FPYL), 82 to 101 (AFLI…VFFL), and 126 to 146 (GIGY…IIIL). The Extracellular segment spans residues 147–220 (AWAIFYLSNC…DGIEHIGNLR (74 aa)). Residues Asn182, Asn185, and Asn193 are each glycosylated (N-linked (GlcNAc...) asparagine). The next 9 membrane-spanning stretches (helical) occupy residues 221–239 (WELA…FCIW), 248–265 (VVYV…ILLI), 301–318 (IFFS…LGSY), 330–351 (IMLC…FSVL), 384–403 (MPLS…FLGL), 433–451 (LLIL…VMLT), 468–488 (GMCL…VYGS), 509–528 (WCWK…FFLV), and 548–566 (IGWL…WIFI). Over 567–627 (KLWKTEGTLP…SAITEKETHF (61 aa)) the chain is Cytoplasmic.

The protein belongs to the sodium:neurotransmitter symporter (SNF) (TC 2.A.22) family. SLC6A11 subfamily. In terms of tissue distribution, brain and retina. Expressed predominantly within neurons. Expressed in the hippocampus (at protein level).

It is found in the cell membrane. It carries out the reaction 4-aminobutanoate(out) + chloride(out) + 2 Na(+)(out) = 4-aminobutanoate(in) + chloride(in) + 2 Na(+)(in). The catalysed reaction is taurine(out) + chloride(out) + 2 Na(+)(out) = taurine(in) + chloride(in) + 2 Na(+)(in). The enzyme catalyses beta-alanine(out) + chloride(out) + 2 Na(+)(out) = beta-alanine(in) + chloride(in) + 2 Na(+)(in). It catalyses the reaction hypotaurine(out) + chloride(out) + 2 Na(+)(out) = hypotaurine(in) + chloride(in) + 2 Na(+)(in). Its activity is regulated as follows. GABA transport is inhibited by beta-alanine. Functionally, mediates sodium- and chloride-dependent transport of gamma-aminobutyric acid (GABA). Can also mediate transport of beta-alanine and to a lower extent that of taurine and hypotaurine. This Rattus norvegicus (Rat) protein is Sodium- and chloride-dependent GABA transporter 3 (Slc6a11).